The primary structure comprises 358 residues: UDP-3-O-acylglucosamine N-acyltransferase (358 aa).

The Proton acceptor role is filled by His252.

The protein belongs to the transferase hexapeptide repeat family. LpxD subfamily. As to quaternary structure, homotrimer.

The catalysed reaction is a UDP-3-O-[(3R)-3-hydroxyacyl]-alpha-D-glucosamine + a (3R)-hydroxyacyl-[ACP] = a UDP-2-N,3-O-bis[(3R)-3-hydroxyacyl]-alpha-D-glucosamine + holo-[ACP] + H(+). It participates in bacterial outer membrane biogenesis; LPS lipid A biosynthesis. In terms of biological role, catalyzes the N-acylation of UDP-3-O-acylglucosamine using 3-hydroxyacyl-ACP as the acyl donor. Is involved in the biosynthesis of lipid A, a phosphorylated glycolipid that anchors the lipopolysaccharide to the outer membrane of the cell. The polypeptide is UDP-3-O-acylglucosamine N-acyltransferase (Paraburkholderia phymatum (strain DSM 17167 / CIP 108236 / LMG 21445 / STM815) (Burkholderia phymatum)).